The chain runs to 156 residues: Small ribosomal subunit protein uS7c (156 aa).

Belongs to the universal ribosomal protein uS7 family. Part of the 30S ribosomal subunit.

It localises to the plastid. The protein resides in the chloroplast. In terms of biological role, one of the primary rRNA binding proteins, it binds directly to 16S rRNA where it nucleates assembly of the head domain of the 30S subunit. The chain is Small ribosomal subunit protein uS7c (rps7) from Pisum sativum (Garden pea).